The chain runs to 907 residues: Protein translocase subunit SecA (907 aa).

ATP contacts are provided by residues Gln-87, 105-109 (GEGKT), and Asp-512. The segment at 834–907 (QSDVDDMEQR…KYKQCHGKLS (74 aa)) is disordered. Residues 840–856 (MEQRRREEEAKIQRDYQ) show a composition bias toward basic and acidic residues. Over residues 865–876 (DESQASSDNTPK) the composition is skewed to polar residues. Positions 878 to 887 (MIREGDKVGR) are enriched in basic and acidic residues. Positions 891, 893, 902, and 903 each coordinate Zn(2+). Positions 897–907 (KKYKQCHGKLS) are enriched in basic residues.

It belongs to the SecA family. Monomer and homodimer. Part of the essential Sec protein translocation apparatus which comprises SecA, SecYEG and auxiliary proteins SecDF-YajC and YidC. Zn(2+) is required as a cofactor.

Its subcellular location is the cell inner membrane. It localises to the cytoplasm. It carries out the reaction ATP + H2O + cellular proteinSide 1 = ADP + phosphate + cellular proteinSide 2.. In terms of biological role, part of the Sec protein translocase complex. Interacts with the SecYEG preprotein conducting channel. Has a central role in coupling the hydrolysis of ATP to the transfer of proteins into and across the cell membrane, serving both as a receptor for the preprotein-SecB complex and as an ATP-driven molecular motor driving the stepwise translocation of polypeptide chains across the membrane. The polypeptide is Protein translocase subunit SecA (Shewanella denitrificans (strain OS217 / ATCC BAA-1090 / DSM 15013)).